Here is a 337-residue protein sequence, read N- to C-terminus: DNA replication regulator sld2 (337 aa).

Residues Thr-60 and Thr-74 each carry the phosphothreonine; by cdc2 modification. Positions 71–97 are disordered; sequence KFQTPTKQRAETEANESPKAPRNDYLQ. Ser-87 carries the phosphoserine; by cdc2 modification. Thr-99 and Thr-154 each carry phosphothreonine; by cdc2. Ser-183 carries the post-translational modification Phosphoserine. The segment at 258 to 302 is disordered; sequence SMNLSKSHLEGLPEIDEDAENGIDDNEDTTASKDSSPFLDLQSER. A compositionally biased stretch (acidic residues) spans 270-285; it reads PEIDEDAENGIDDNED.

Belongs to the SLD2 family. As to quaternary structure, interacts with rad4. Phosphorylated by cdc2 at the onset of S-phase.

The protein localises to the cytoplasm. It is found in the nucleus. Its function is as follows. Has a role in the initiation of DNA replication. Required at S-phase checkpoint. The chain is DNA replication regulator sld2 (drc1) from Schizosaccharomyces pombe (strain 972 / ATCC 24843) (Fission yeast).